The following is a 400-amino-acid chain: Acetate kinase (400 aa).

Position 9 (N9) interacts with Mg(2+). K16 contributes to the ATP binding site. R90 lines the substrate pocket. The active-site Proton donor/acceptor is the D147. ATP is bound by residues 207 to 211 (HIGNG), 282 to 284 (DLR), and 330 to 334 (GIGEN). E385 contributes to the Mg(2+) binding site.

It belongs to the acetokinase family. In terms of assembly, homodimer. Requires Mg(2+) as cofactor. It depends on Mn(2+) as a cofactor.

Its subcellular location is the cytoplasm. It catalyses the reaction acetate + ATP = acetyl phosphate + ADP. The protein operates within metabolic intermediate biosynthesis; acetyl-CoA biosynthesis; acetyl-CoA from acetate: step 1/2. Catalyzes the formation of acetyl phosphate from acetate and ATP. Can also catalyze the reverse reaction. This Staphylococcus aureus (strain Mu3 / ATCC 700698) protein is Acetate kinase.